The chain runs to 181 residues: c-Myc-binding protein homolog (181 aa).

Residues 111-127 (ESTEAAEQQQQQQQQEN) are compositionally biased toward low complexity. 2 disordered regions span residues 111–145 (ESTE…VAEI) and 159–181 (VVTT…GSSE). The span at 168-181 (PSPTVQAEASGSSE) shows a compositional bias: polar residues.

Belongs to the AMY1 family.

It is found in the nucleus. The protein is c-Myc-binding protein homolog of Drosophila melanogaster (Fruit fly).